A 307-amino-acid polypeptide reads, in one-letter code: 2,4-diacetylphloroglucinol hydrolase (307 aa).

Zn(2+)-binding residues include His142, Glu173, His283, and Glu287.

Belongs to the DAPG/phloretin hydrolase family. The cofactor is Zn(2+).

It carries out the reaction 2,4-diacetylphloroglucinol + H2O = 2-acetylphloroglucinol + acetate. Its activity is regulated as follows. Activity is strongly reduced by pyoluteorin, an antifungal compound produced by the bacterium. Its function is as follows. Hydrolase that specifically degrades the potent antimicrobial compound 2,4-diacetylphloroglucinol (DAPG) to equimolar amounts of mildly toxic monoacetylphloroglucinol (MAPG) and acetate. Does not degrade other compounds with structures similar to DAPG, such as MAPG and triacetylphloroglucinol, suggesting strict substrate specificity. Degradation of DAPG to MAPG may provide an additional means of fine-tuning levels of this antibiotic or may help avoid accumulation of a metabolite that at high levels may become toxic to the producing bacterium. This chain is 2,4-diacetylphloroglucinol hydrolase, found in Pseudomonas protegens (strain DSM 19095 / LMG 27888 / CFBP 6595 / CHA0).